We begin with the raw amino-acid sequence, 143 residues long: Large ribosomal subunit protein uL22c (143 aa).

Belongs to the universal ribosomal protein uL22 family. In terms of assembly, part of the 50S ribosomal subunit.

The protein resides in the plastid. The protein localises to the chloroplast. In terms of biological role, this protein binds specifically to 23S rRNA. The globular domain of the protein is located near the polypeptide exit tunnel on the outside of the subunit, while an extended beta-hairpin is found that lines the wall of the exit tunnel in the center of the 70S ribosome. This Piper cenocladum (Ant piper) protein is Large ribosomal subunit protein uL22c (rpl22).